The primary structure comprises 122 residues: Large ribosomal subunit protein uL14c (122 aa).

It belongs to the universal ribosomal protein uL14 family. In terms of assembly, part of the 50S ribosomal subunit.

Its subcellular location is the plastid. It localises to the chloroplast. Functionally, binds to 23S rRNA. The protein is Large ribosomal subunit protein uL14c of Pinus koraiensis (Korean pine).